We begin with the raw amino-acid sequence, 56 residues long: UPF0391 membrane protein Rru_A0119 (56 aa).

2 consecutive transmembrane segments (helical) span residues 4–24 and 30–50; these read WALI…GGIA and IAQI…IMHF.

The protein belongs to the UPF0391 family.

The protein resides in the cell membrane. This Rhodospirillum rubrum (strain ATCC 11170 / ATH 1.1.1 / DSM 467 / LMG 4362 / NCIMB 8255 / S1) protein is UPF0391 membrane protein Rru_A0119.